A 178-amino-acid polypeptide reads, in one-letter code: ATP-dependent protease subunit HslV (178 aa).

Residue T7 is part of the active site. Na(+) contacts are provided by G162, C165, and T168.

It belongs to the peptidase T1B family. HslV subfamily. A double ring-shaped homohexamer of HslV is capped on each side by a ring-shaped HslU homohexamer. The assembly of the HslU/HslV complex is dependent on binding of ATP.

It localises to the cytoplasm. The catalysed reaction is ATP-dependent cleavage of peptide bonds with broad specificity.. Its activity is regulated as follows. Allosterically activated by HslU binding. In terms of biological role, protease subunit of a proteasome-like degradation complex believed to be a general protein degrading machinery. This is ATP-dependent protease subunit HslV from Burkholderia multivorans (strain ATCC 17616 / 249).